An 815-amino-acid polypeptide reads, in one-letter code: Patatin-like phospholipase domain-containing protein LELG_00944 (815 aa).

Residues valine 41–leucine 50 are compositionally biased toward polar residues. 2 disordered regions span residues valine 41–lysine 105 and serine 140–proline 166. Positions leucine 54–valine 73 are enriched in low complexity. Acidic residues predominate over residues valine 74 to aspartate 94. The segment covering lysine 148–lysine 160 has biased composition (basic residues). Residues tryptophan 185 to valine 205 form a helical membrane-spanning segment. Positions leucine 360–asparagine 552 constitute a PNPLA domain. Residues glycine 391–glycine 395 carry the GXSXG motif. Serine 393 acts as the Nucleophile in catalysis. Aspartate 539 (proton acceptor) is an active-site residue. The tract at residues glycine 753–tyrosine 815 is disordered. Residues aspartate 759–alanine 799 show a composition bias toward acidic residues.

This sequence belongs to the PLPL family.

It localises to the membrane. In terms of biological role, probable lipid hydrolase. The chain is Patatin-like phospholipase domain-containing protein LELG_00944 from Lodderomyces elongisporus (strain ATCC 11503 / CBS 2605 / JCM 1781 / NBRC 1676 / NRRL YB-4239) (Yeast).